The following is a 1692-amino-acid chain: Adenylate cyclase (1692 aa).

Disordered regions lie at residues M1–G22 and S103–N142. The segment covering E120–R132 has biased composition (basic and acidic residues). The segment at F174–D195 is required for interaction with gpa2. The 89-residue stretch at K292–N380 folds into the Ras-associating domain. 21 LRR repeats span residues E430–E450, K454–A474, Q477–G498, S503–L524, N526–L547, Q549–L570, K572–L594, N596–P617, K618–A639, N660–T681, N684–M705, N707–K729, H730–V751, S753–S774, Q783–M805, T807–E827, C831–N852, D855–Q876, L878–S899, S901–K922, and Q930–N951. One can recognise a PPM-type phosphatase domain in the interval R995 to L1275. One can recognise a Guanylate cyclase domain in the interval A1332 to V1469. Mg(2+) is bound by residues D1337 and D1380. Mn(2+) contacts are provided by D1337 and D1380. The span at S1585–S1597 shows a compositional bias: basic and acidic residues. The segment at S1585–T1614 is disordered. The segment covering R1600–T1614 has biased composition (polar residues).

This sequence belongs to the adenylyl cyclase class-3 family. As to quaternary structure, interacts (via N-terminus) with gpa2; the interaction is direct and serves to activate adenylate cyclase and cAMP-PKA signaling, to repress sexual development and gluconeogenesis. Interacts with git1. It depends on Mn(2+) as a cofactor.

The protein localises to the cytoplasm. It catalyses the reaction ATP = 3',5'-cyclic AMP + diphosphate. Its activity is regulated as follows. Activated by binding G protein gpa2. Activated by git1. In contrast to yeast cyclase, S.pombe cyclase is not likely to be regulated by RAS proteins. In terms of biological role, acts in glucose-induced cAMP signaling by catalyzing the synthesis of the second messenger, cAMP to activate PKA signaling and repress sexual development and gluconeogenesis. The chain is Adenylate cyclase from Schizosaccharomyces pombe (strain 972 / ATCC 24843) (Fission yeast).